The sequence spans 321 residues: Ferredoxin--NADP reductase (321 aa).

Residues glutamate 33, glutamine 41, tyrosine 46, valine 86, leucine 119, aspartate 277, and serine 318 each contribute to the FAD site.

It belongs to the ferredoxin--NADP reductase type 2 family. In terms of assembly, homodimer. FAD is required as a cofactor.

It carries out the reaction 2 reduced [2Fe-2S]-[ferredoxin] + NADP(+) + H(+) = 2 oxidized [2Fe-2S]-[ferredoxin] + NADPH. This chain is Ferredoxin--NADP reductase, found in Lactococcus lactis subsp. cremoris (strain SK11).